The chain runs to 202 residues: ATP-dependent Clp protease proteolytic subunit 3 (202 aa).

The active-site Nucleophile is serine 93. Histidine 118 is an active-site residue.

This sequence belongs to the peptidase S14 family. As to quaternary structure, fourteen ClpP subunits assemble into 2 heptameric rings which stack back to back to give a disk-like structure with a central cavity, resembling the structure of eukaryotic proteasomes.

The protein localises to the cytoplasm. It carries out the reaction Hydrolysis of proteins to small peptides in the presence of ATP and magnesium. alpha-casein is the usual test substrate. In the absence of ATP, only oligopeptides shorter than five residues are hydrolyzed (such as succinyl-Leu-Tyr-|-NHMec, and Leu-Tyr-Leu-|-Tyr-Trp, in which cleavage of the -Tyr-|-Leu- and -Tyr-|-Trp bonds also occurs).. Its function is as follows. Cleaves peptides in various proteins in a process that requires ATP hydrolysis. Has a chymotrypsin-like activity. Plays a major role in the degradation of misfolded proteins. In Rhodococcus jostii (strain RHA1), this protein is ATP-dependent Clp protease proteolytic subunit 3.